Consider the following 101-residue polypeptide: Putative antitoxin HigA2 (101 aa).

The region spanning 35-90 (LRELRAAQSLTQVQVAALAHIRQSRVSSIENGDIGSAQVNTLRKYVSALGGELDIT) is the HTH cro/C1-type domain. Positions 46–65 (QVQVAALAHIRQSRVSSIEN) form a DNA-binding region, H-T-H motif.

Its function is as follows. Putative antitoxin component of a type II toxin-antitoxin (TA) system. Its cognate toxin would be HigB2. This Mycobacterium tuberculosis (strain ATCC 25618 / H37Rv) protein is Putative antitoxin HigA2.